The sequence spans 391 residues: Chalcone synthase (391 aa).

Cys-164 is an active-site residue.

Belongs to the thiolase-like superfamily. Chalcone/stilbene synthases family.

The enzyme catalyses (E)-4-coumaroyl-CoA + 3 malonyl-CoA + 3 H(+) = 2',4,4',6'-tetrahydroxychalcone + 3 CO2 + 4 CoA. The protein operates within secondary metabolite biosynthesis; flavonoid biosynthesis. The primary product of this enzyme is 4,2',4',6'-tetrahydroxychalcone (also termed naringenin-chalcone or chalcone) which can under specific conditions spontaneously isomerize into naringenin. This is Chalcone synthase (CHS) from Dianthus monspessulanus.